A 326-amino-acid chain; its full sequence is Aspartate carbamoyltransferase catalytic subunit (326 aa).

2 residues coordinate carbamoyl phosphate: R58 and T59. An L-aspartate-binding site is contributed by K86. Residues R108, H141, and Q144 each contribute to the carbamoyl phosphate site. The L-aspartate site is built by R181 and R239. 2 residues coordinate carbamoyl phosphate: G280 and P281.

This sequence belongs to the aspartate/ornithine carbamoyltransferase superfamily. ATCase family. As to quaternary structure, heterododecamer (2C3:3R2) of six catalytic PyrB chains organized as two trimers (C3), and six regulatory PyrI chains organized as three dimers (R2).

It catalyses the reaction carbamoyl phosphate + L-aspartate = N-carbamoyl-L-aspartate + phosphate + H(+). It functions in the pathway pyrimidine metabolism; UMP biosynthesis via de novo pathway; (S)-dihydroorotate from bicarbonate: step 2/3. Catalyzes the condensation of carbamoyl phosphate and aspartate to form carbamoyl aspartate and inorganic phosphate, the committed step in the de novo pyrimidine nucleotide biosynthesis pathway. This Synechococcus sp. (strain JA-3-3Ab) (Cyanobacteria bacterium Yellowstone A-Prime) protein is Aspartate carbamoyltransferase catalytic subunit.